The sequence spans 531 residues: Type 2 DNA topoisomerase 6 subunit B (531 aa).

ATP contacts are provided by residues Asn42, Asp76, 97–98 (SK), 106–113 (GMYGLGVK), and Lys427.

Belongs to the TOP6B family. Homodimer. Heterotetramer of two Top6A and two Top6B chains.

The catalysed reaction is ATP-dependent breakage, passage and rejoining of double-stranded DNA.. Relaxes both positive and negative superturns and exhibits a strong decatenase activity. This is Type 2 DNA topoisomerase 6 subunit B from Metallosphaera sedula (strain ATCC 51363 / DSM 5348 / JCM 9185 / NBRC 15509 / TH2).